We begin with the raw amino-acid sequence, 205 residues long: High frequency lysogenization protein HflD homolog (205 aa).

The protein belongs to the HflD family.

The protein resides in the cytoplasm. It is found in the cell inner membrane. This is High frequency lysogenization protein HflD homolog from Haemophilus influenzae (strain 86-028NP).